The primary structure comprises 490 residues: Argininosuccinate lyase (490 aa).

This sequence belongs to the lyase 1 family. Argininosuccinate lyase subfamily.

The protein resides in the cytoplasm. The enzyme catalyses 2-(N(omega)-L-arginino)succinate = fumarate + L-arginine. Its pathway is amino-acid biosynthesis; L-arginine biosynthesis; L-arginine from L-ornithine and carbamoyl phosphate: step 3/3. In Bifidobacterium longum subsp. infantis (strain ATCC 15697 / DSM 20088 / JCM 1222 / NCTC 11817 / S12), this protein is Argininosuccinate lyase.